Here is a 520-residue protein sequence, read N- to C-terminus: GMP synthase [glutamine-hydrolyzing] (520 aa).

The 194-residue stretch at 12–205 folds into the Glutamine amidotransferase type-1 domain; it reads KIIVLDYGSQ…AIFICGARGD (194 aa). Cys-89 functions as the Nucleophile in the catalytic mechanism. Catalysis depends on residues His-179 and Glu-181. A GMPS ATP-PPase domain is found at 206–395; the sequence is WSMDNFIDMQ…LGMPENIVWR (190 aa). 233–239 lines the ATP pocket; it reads SGGVDSS.

In terms of assembly, homodimer.

It catalyses the reaction XMP + L-glutamine + ATP + H2O = GMP + L-glutamate + AMP + diphosphate + 2 H(+). The protein operates within purine metabolism; GMP biosynthesis; GMP from XMP (L-Gln route): step 1/1. Its function is as follows. Catalyzes the synthesis of GMP from XMP. This chain is GMP synthase [glutamine-hydrolyzing], found in Streptococcus uberis (strain ATCC BAA-854 / 0140J).